A 316-amino-acid chain; its full sequence is D-alanine--D-alanine ligase (316 aa).

Positions 104–303 (KRVWLQHGLP…YADLCVAILA (200 aa)) constitute an ATP-grasp domain. 130–185 (PDRLGLPLILKPPHEGSTVGITKVAGYSDMKAAYELAARFDAEVLAEQFITGRELT) contacts ATP. D257, E270, and N272 together coordinate Mg(2+).

The protein belongs to the D-alanine--D-alanine ligase family. Requires Mg(2+) as cofactor. Mn(2+) serves as cofactor.

The protein localises to the cytoplasm. It catalyses the reaction 2 D-alanine + ATP = D-alanyl-D-alanine + ADP + phosphate + H(+). It functions in the pathway cell wall biogenesis; peptidoglycan biosynthesis. In terms of biological role, cell wall formation. The sequence is that of D-alanine--D-alanine ligase from Bordetella parapertussis (strain 12822 / ATCC BAA-587 / NCTC 13253).